Here is a 312-residue protein sequence, read N- to C-terminus: Methionyl-tRNA formyltransferase (312 aa).

109-112 (SLLP) serves as a coordination point for (6S)-5,6,7,8-tetrahydrofolate.

It belongs to the Fmt family.

It catalyses the reaction L-methionyl-tRNA(fMet) + (6R)-10-formyltetrahydrofolate = N-formyl-L-methionyl-tRNA(fMet) + (6S)-5,6,7,8-tetrahydrofolate + H(+). Attaches a formyl group to the free amino group of methionyl-tRNA(fMet). The formyl group appears to play a dual role in the initiator identity of N-formylmethionyl-tRNA by promoting its recognition by IF2 and preventing the misappropriation of this tRNA by the elongation apparatus. The chain is Methionyl-tRNA formyltransferase from Anaeromyxobacter dehalogenans (strain 2CP-1 / ATCC BAA-258).